Reading from the N-terminus, the 453-residue chain is Bifunctional protein GlmU (453 aa).

The interval 1–231 (MERTCLAIIL…EVEMTGCNNR (231 aa)) is pyrophosphorylase. UDP-N-acetyl-alpha-D-glucosamine-binding positions include 10 to 13 (LAAG), Lys-24, Gln-77, 82 to 83 (GT), 105 to 107 (YGD), Gly-143, Glu-157, Asn-172, and Asn-229. Position 107 (Asp-107) interacts with Mg(2+). Asn-229 is a Mg(2+) binding site. The interval 232–252 (AELAFIERLWQERRRHELMLS) is linker. An N-acetyltransferase region spans residues 253-453 (GVTMIAPETV…AIKAAKKGSH (201 aa)). UDP-N-acetyl-alpha-D-glucosamine-binding residues include Arg-318 and Lys-336. The active-site Proton acceptor is His-348. UDP-N-acetyl-alpha-D-glucosamine-binding residues include Tyr-351 and Asn-362. Acetyl-CoA is bound by residues Ala-365, 371 to 372 (NY), Ser-390, Ser-408, and Arg-425.

The protein in the N-terminal section; belongs to the N-acetylglucosamine-1-phosphate uridyltransferase family. This sequence in the C-terminal section; belongs to the transferase hexapeptide repeat family. Homotrimer. Mg(2+) is required as a cofactor.

The protein localises to the cytoplasm. The enzyme catalyses alpha-D-glucosamine 1-phosphate + acetyl-CoA = N-acetyl-alpha-D-glucosamine 1-phosphate + CoA + H(+). It carries out the reaction N-acetyl-alpha-D-glucosamine 1-phosphate + UTP + H(+) = UDP-N-acetyl-alpha-D-glucosamine + diphosphate. The protein operates within nucleotide-sugar biosynthesis; UDP-N-acetyl-alpha-D-glucosamine biosynthesis; N-acetyl-alpha-D-glucosamine 1-phosphate from alpha-D-glucosamine 6-phosphate (route II): step 2/2. Its pathway is nucleotide-sugar biosynthesis; UDP-N-acetyl-alpha-D-glucosamine biosynthesis; UDP-N-acetyl-alpha-D-glucosamine from N-acetyl-alpha-D-glucosamine 1-phosphate: step 1/1. It functions in the pathway bacterial outer membrane biogenesis; LPS lipid A biosynthesis. In terms of biological role, catalyzes the last two sequential reactions in the de novo biosynthetic pathway for UDP-N-acetylglucosamine (UDP-GlcNAc). The C-terminal domain catalyzes the transfer of acetyl group from acetyl coenzyme A to glucosamine-1-phosphate (GlcN-1-P) to produce N-acetylglucosamine-1-phosphate (GlcNAc-1-P), which is converted into UDP-GlcNAc by the transfer of uridine 5-monophosphate (from uridine 5-triphosphate), a reaction catalyzed by the N-terminal domain. This is Bifunctional protein GlmU from Rhizobium rhizogenes (strain K84 / ATCC BAA-868) (Agrobacterium radiobacter).